The following is a 157-amino-acid chain: SsrA-binding protein (157 aa).

A disordered region spans residues 133-157 (LHDKRETEKKRDWSREKGRLLRARG). Residues 135 to 151 (DKRETEKKRDWSREKGR) are compositionally biased toward basic and acidic residues.

This sequence belongs to the SmpB family.

It localises to the cytoplasm. In terms of biological role, required for rescue of stalled ribosomes mediated by trans-translation. Binds to transfer-messenger RNA (tmRNA), required for stable association of tmRNA with ribosomes. tmRNA and SmpB together mimic tRNA shape, replacing the anticodon stem-loop with SmpB. tmRNA is encoded by the ssrA gene; the 2 termini fold to resemble tRNA(Ala) and it encodes a 'tag peptide', a short internal open reading frame. During trans-translation Ala-aminoacylated tmRNA acts like a tRNA, entering the A-site of stalled ribosomes, displacing the stalled mRNA. The ribosome then switches to translate the ORF on the tmRNA; the nascent peptide is terminated with the 'tag peptide' encoded by the tmRNA and targeted for degradation. The ribosome is freed to recommence translation, which seems to be the essential function of trans-translation. The polypeptide is SsrA-binding protein (Bradyrhizobium diazoefficiens (strain JCM 10833 / BCRC 13528 / IAM 13628 / NBRC 14792 / USDA 110)).